Here is a 661-residue protein sequence, read N- to C-terminus: Bifunctional polymyxin resistance protein ArnA (661 aa).

The interval 1–304 is formyltransferase ArnAFT; sequence MKAVVFAYHD…ALGLVSGAVI (304 aa). The active-site Proton donor; for formyltransferase activity is H104. (6R)-10-formyltetrahydrofolate is bound by residues R114 and 136–140; that span reads VNRAD. The interval 314–661 is dehydrogenase ArnADH; that stretch reads RRTRVLILGV…TVELVDDKNP (348 aa). NAD(+) is bound by residues D347 and 368–369; that span reads DI. UDP-alpha-D-glucuronate contacts are provided by residues A393, Y398, and 432–433; that span reads TS. Residue E434 is the Proton acceptor; for decarboxylase activity of the active site. UDP-alpha-D-glucuronate contacts are provided by residues R460, N492, 526–535, and Y613; that span reads KLIEGGKQKR. R619 functions as the Proton donor; for decarboxylase activity in the catalytic mechanism.

In the N-terminal section; belongs to the Fmt family. UDP-L-Ara4N formyltransferase subfamily. This sequence in the C-terminal section; belongs to the NAD(P)-dependent epimerase/dehydratase family. UDP-glucuronic acid decarboxylase subfamily. Homohexamer, formed by a dimer of trimers.

It carries out the reaction UDP-alpha-D-glucuronate + NAD(+) = UDP-beta-L-threo-pentopyranos-4-ulose + CO2 + NADH. The enzyme catalyses UDP-4-amino-4-deoxy-beta-L-arabinose + (6R)-10-formyltetrahydrofolate = UDP-4-deoxy-4-formamido-beta-L-arabinose + (6S)-5,6,7,8-tetrahydrofolate + H(+). The protein operates within nucleotide-sugar biosynthesis; UDP-4-deoxy-4-formamido-beta-L-arabinose biosynthesis; UDP-4-deoxy-4-formamido-beta-L-arabinose from UDP-alpha-D-glucuronate: step 1/3. It participates in nucleotide-sugar biosynthesis; UDP-4-deoxy-4-formamido-beta-L-arabinose biosynthesis; UDP-4-deoxy-4-formamido-beta-L-arabinose from UDP-alpha-D-glucuronate: step 3/3. Its pathway is bacterial outer membrane biogenesis; lipopolysaccharide biosynthesis. Functionally, bifunctional enzyme that catalyzes the oxidative decarboxylation of UDP-glucuronic acid (UDP-GlcUA) to UDP-4-keto-arabinose (UDP-Ara4O) and the addition of a formyl group to UDP-4-amino-4-deoxy-L-arabinose (UDP-L-Ara4N) to form UDP-L-4-formamido-arabinose (UDP-L-Ara4FN). The modified arabinose is attached to lipid A and is required for resistance to polymyxin and cationic antimicrobial peptides. This chain is Bifunctional polymyxin resistance protein ArnA, found in Klebsiella pneumoniae subsp. pneumoniae (strain ATCC 700721 / MGH 78578).